Reading from the N-terminus, the 200-residue chain is MKILAGLGNYEPKYLRNRHNVGFMALDIIAQAWNAGPWRKRFQGLASEVTIGSNKLLLLKPQTFYNNAGNSVGAAAAFYRVKPEDIIVFHDELDLAPGKFRMKMGGGAAGNNGIKSITSQLGPDFRRARIGIGHPGDRNRVTGYVLSDFAKAEEAWLIDLLDAIAGSLDLLAAGDYDAFQTKVTHKAPAPEVVKRGPDAD.

TRNA is bound at residue Y14. H19 functions as the Proton acceptor in the catalytic mechanism. 3 residues coordinate tRNA: F64, N66, and N112.

The protein belongs to the PTH family. In terms of assembly, monomer.

It localises to the cytoplasm. The enzyme catalyses an N-acyl-L-alpha-aminoacyl-tRNA + H2O = an N-acyl-L-amino acid + a tRNA + H(+). In terms of biological role, hydrolyzes ribosome-free peptidyl-tRNAs (with 1 or more amino acids incorporated), which drop off the ribosome during protein synthesis, or as a result of ribosome stalling. Catalyzes the release of premature peptidyl moieties from peptidyl-tRNA molecules trapped in stalled 50S ribosomal subunits, and thus maintains levels of free tRNAs and 50S ribosomes. The chain is Peptidyl-tRNA hydrolase from Maricaulis maris (strain MCS10) (Caulobacter maris).